Reading from the N-terminus, the 776-residue chain is Protocadherin beta-16 (776 aa).

An N-terminal signal peptide occupies residues 1–28 (MEIGWMHNRRQRQVLVFFVLLSLSGAGA). Residues 29-690 (ELGSYSVVEE…TQANSLTVYL (662 aa)) lie on the Extracellular side of the membrane. 5 Cadherin domains span residues 35 to 133 (VVEE…SPMF), 138 to 242 (MILK…APEF), 247 to 347 (YKVQ…PPQV), 352 to 451 (LTSP…APTF), and 456 to 561 (YTLF…SPFV). N-linked (GlcNAc...) asparagine glycans are attached at residues Asn418 and Asn436. The N-linked (GlcNAc...) asparagine glycan is linked to Asn567. The Cadherin 6 domain maps to 568-671 (GSAPCTELVP…LVDGFSQPFL (104 aa)). Residues 691–711 (VVALASVSSLFLFSVLLFVAV) traverse the membrane as a helical segment. The Cytoplasmic portion of the chain corresponds to 712-776 (RLCRRSRAAS…LKPIIPNFSP (65 aa)).

It localises to the membrane. Its function is as follows. Potential calcium-dependent cell-adhesion protein. May be involved in the establishment and maintenance of specific neuronal connections in the brain. In Homo sapiens (Human), this protein is Protocadherin beta-16.